Reading from the N-terminus, the 1169-residue chain is Chromosome partition protein Smc (1169 aa).

Residue 32–39 coordinates ATP; the sequence is PNGSGKSN. The stretch at 166–507 forms a coiled coil; sequence DEISGIAEFD…RIKALKEMEE (342 aa). Residues 523-636 form the SMC hinge domain; that stretch reads PGIIDIVGNL…ENIDIAKELA (114 aa). Residues 676–1030 are a coiled coil; sequence SKLNKIADEI…NKKKEVFMEV (355 aa).

Belongs to the SMC family. In terms of assembly, homodimer.

It localises to the cytoplasm. Functionally, required for chromosome condensation and partitioning. The polypeptide is Chromosome partition protein Smc (Methanocaldococcus jannaschii (strain ATCC 43067 / DSM 2661 / JAL-1 / JCM 10045 / NBRC 100440) (Methanococcus jannaschii)).